A 287-amino-acid chain; its full sequence is MKVLLLTGLGALFFAYYWDDNFDPASLHGARVLLTGVSAGIGEELAYHYARLGSHLVLTAHTEALLQQVVGNCRKLGAPKVFYIAADMASPEVPERVVQFALDKLGGLDYLVLNHLGAAPAGTRVRSSQSTRWLMQMNFLSYVQLTSSALPSLTDSKGSLVVVSSLLGRVPTSFSSPYSAAKFALDSFFSSLRRELDVQEVNVAITMCVLGLRDRASAAEGVRGITRVRAAPGPKAALAVIRGGATRASGVFYPWRFHLLCLLRSWMPHSRAWFVRQELNITTPAAA.

An N-terminal signal peptide occupies residues 1–15 (MKVLLLTGLGALFFA). NADP(+)-binding positions include 36-62 (GVSA…TAHT), 87-88 (DM), and 114-116 (NHL). Ser-165 is a binding site for substrate. The Proton acceptor role is filled by Tyr-178. NADP(+)-binding positions include 178–182 (YSAAK) and 211–217 (GLRDRAS). N-linked (GlcNAc...) asparagine glycosylation is present at Asn-280.

This sequence belongs to the short-chain dehydrogenases/reductases (SDR) family.

Its subcellular location is the secreted. The catalysed reaction is cortisone + NADPH + H(+) = cortisol + NADP(+). Unidirectional NADP(+)-dependent cortisol dehydrogenase (in vitro). This chain is Hydroxysteroid 11-beta-dehydrogenase 1-like protein (HSD11B1L), found in Bos taurus (Bovine).